The primary structure comprises 131 residues: Small ribosomal subunit protein uS11 (131 aa).

This sequence belongs to the universal ribosomal protein uS11 family. As to quaternary structure, part of the 30S ribosomal subunit. Interacts with proteins S7 and S18. Binds to IF-3.

Located on the platform of the 30S subunit, it bridges several disparate RNA helices of the 16S rRNA. Forms part of the Shine-Dalgarno cleft in the 70S ribosome. This Deinococcus radiodurans (strain ATCC 13939 / DSM 20539 / JCM 16871 / CCUG 27074 / LMG 4051 / NBRC 15346 / NCIMB 9279 / VKM B-1422 / R1) protein is Small ribosomal subunit protein uS11.